Here is a 473-residue protein sequence, read N- to C-terminus: MSVDAFSRESDDMMSLLDYDFIEGSSSDENAEVTEMETSAKTANNKNEVLFAPPCTQELLTERPSPDSKNSQGDDDSNSIYGNVIRDAQHSASRYATRCLDNAIPRKRLRLANLTVDSACISQTKRPHGTGNRKQYHRRNFPMSPTSQEKIHLRLHNRLGSRSEKQQRSLNYDRRLQEGHHRRRFYSERRIYDQNHSHHRTHDIRVPLEKYRVSRQHDLPVHEELNEILQREKHRLASISNECDFRVSSKNRWAAVLTFSSNAESTLCGPQITWEYLLHAGPELRNTFEIRPRISLQASAAREAVLRGESFIAALGSAEETLSWLKLHAVLKLRLVNHDPIFKTAGAVLDNLRLKLAPIMMCKYGTEKRSMGDMLRRSAPEDINDSLTLCLILLSRIRRVMHRTSGSKYSYMIDPRGCMIDYVPGECMTNILRYVDAHTRRCSDPACNLYISCTLMPIYIHGRYFYCNTLFGM.

Disordered stretches follow at residues 57 to 81 (QELLTERPSPDSKNSQGDDDSNSIY) and 123 to 143 (QTKRPHGTGNRKQYHRRNFPM). Positions 362, 438, 442, and 447 each coordinate Zn(2+). Residues 362–447 (CKYGTEKRSM…HTRRCSDPAC (86 aa)) form a CHC2-type zinc finger.

The protein belongs to the HHV-1 ICP27 protein family. As to quaternary structure, associates in a complex with RNA, and host export factors NXF1/TAP and ALYREF; these interactions allow nuclear export of viral transcripts.

Its subcellular location is the host cytoplasm. It is found in the host nucleus. In terms of biological role, multifunctional regulator of the expression of viral genes that mediates nuclear export of viral intronless mRNAs. This immediate early (EI) protein promotes the nuclear export of viral intronless mRNAs by interacting with mRNAs and host NXF1/TAP. The chain is mRNA export factor ICP27 homolog from Gallus gallus (Chicken).